A 78-amino-acid polypeptide reads, in one-letter code: Large ribosomal subunit protein bL28 (78 aa).

The protein belongs to the bacterial ribosomal protein bL28 family.

The chain is Large ribosomal subunit protein bL28 from Psychrobacter arcticus (strain DSM 17307 / VKM B-2377 / 273-4).